The following is a 616-amino-acid chain: Adenylosuccinate synthetase 1 (616 aa).

Residues 1 to 27 (MDKQAERGQSAGPVKTPQGTQPPAHNY) form a disordered region. The segment covering 17-27 (PQGTQPPAHNY) has biased composition (polar residues). GTP-binding positions include 87-93 (GDEGKGK) and 117-119 (GHT). Residue D88 is the Proton acceptor of the active site. 2 residues coordinate Mg(2+): D88 and G117. IMP contacts are provided by residues 88–91 (DEGK), 115–118 (NAGH), T202, K216, Q328, T343, and K472. The active-site Proton donor is H118. Substrate is bound at residue 468–474 (AVTKKPR). Residues R474 and 603 to 605 (GNG) contribute to the GTP site.

It belongs to the adenylosuccinate synthetase family. Homodimer. Mg(2+) serves as cofactor.

The protein localises to the cytoplasm. The catalysed reaction is IMP + L-aspartate + GTP = N(6)-(1,2-dicarboxyethyl)-AMP + GDP + phosphate + 2 H(+). Its pathway is purine metabolism; AMP biosynthesis via de novo pathway; AMP from IMP: step 1/2. In terms of biological role, plays an important role in the salvage pathway for purine nucleotide biosynthesis. Catalyzes the first committed step in the biosynthesis of AMP from IMP. This chain is Adenylosuccinate synthetase 1, found in Trypanosoma cruzi (strain CL Brener).